Reading from the N-terminus, the 195-residue chain is MILSDADILRRLEQGDLVVEPLDDPDIQIQPASVDLRLGHEFLEFQHANIPCIHPNSEDEVSDYVEETVIEEGGEFILHPGDFVLGTTHERVAIPDDLIAHVEGRSSLGRLAIVVHATAGLCDPGYEGQITLELSNLGTAPVALTPGMRISQLTFTELKTPADRPYGAERGSKYQGQSGPQASKIQGDREFGGDQ.

Residues 105–110 (RSSLGR), D123, 131–133 (TLE), Q152, Y166, K173, and Q177 each bind dCTP. E133 functions as the Proton donor/acceptor in the catalytic mechanism. The interval 159–195 (KTPADRPYGAERGSKYQGQSGPQASKIQGDREFGGDQ) is disordered. Positions 160 to 172 (TPADRPYGAERGS) are enriched in basic and acidic residues. The span at 174–184 (YQGQSGPQASK) shows a compositional bias: polar residues. Residues 186–195 (QGDREFGGDQ) show a composition bias toward basic and acidic residues.

This sequence belongs to the dCTP deaminase family. Homotrimer.

It catalyses the reaction dCTP + H2O + H(+) = dUTP + NH4(+). Its pathway is pyrimidine metabolism; dUMP biosynthesis; dUMP from dCTP (dUTP route): step 1/2. Catalyzes the deamination of dCTP to dUTP. In Haloarcula marismortui (strain ATCC 43049 / DSM 3752 / JCM 8966 / VKM B-1809) (Halobacterium marismortui), this protein is dCTP deaminase.